A 437-amino-acid chain; its full sequence is UDP-N-acetylmuramate--L-alanine ligase (437 aa).

108 to 114 (GAHGKTS) serves as a coordination point for ATP.

The protein belongs to the MurCDEF family.

The protein localises to the cytoplasm. It catalyses the reaction UDP-N-acetyl-alpha-D-muramate + L-alanine + ATP = UDP-N-acetyl-alpha-D-muramoyl-L-alanine + ADP + phosphate + H(+). The protein operates within cell wall biogenesis; peptidoglycan biosynthesis. Its function is as follows. Cell wall formation. This Staphylococcus aureus (strain COL) protein is UDP-N-acetylmuramate--L-alanine ligase.